The sequence spans 247 residues: Orotidine 5'-phosphate decarboxylase (247 aa).

Residues Asp21, Lys43, Asp70–Thr79, Thr129, Arg190, Gln199, Gly219, and Arg220 each bind substrate. Lys72 (proton donor) is an active-site residue.

The protein belongs to the OMP decarboxylase family. Type 1 subfamily. In terms of assembly, homodimer.

The catalysed reaction is orotidine 5'-phosphate + H(+) = UMP + CO2. It participates in pyrimidine metabolism; UMP biosynthesis via de novo pathway; UMP from orotate: step 2/2. In terms of biological role, catalyzes the decarboxylation of orotidine 5'-monophosphate (OMP) to uridine 5'-monophosphate (UMP). In Chromobacterium violaceum (strain ATCC 12472 / DSM 30191 / JCM 1249 / CCUG 213 / NBRC 12614 / NCIMB 9131 / NCTC 9757 / MK), this protein is Orotidine 5'-phosphate decarboxylase.